The sequence spans 350 residues: Biotin synthase (350 aa).

One can recognise a Radical SAM core domain in the interval 54-278; it reads REIQLSTLLS…TMPQSYVRLS (225 aa). [4Fe-4S] cluster-binding residues include cysteine 69, cysteine 73, and cysteine 76. [2Fe-2S] cluster is bound by residues cysteine 113, cysteine 144, cysteine 204, and arginine 276.

Belongs to the radical SAM superfamily. Biotin synthase family. In terms of assembly, homodimer. [4Fe-4S] cluster serves as cofactor. The cofactor is [2Fe-2S] cluster.

It carries out the reaction (4R,5S)-dethiobiotin + (sulfur carrier)-SH + 2 reduced [2Fe-2S]-[ferredoxin] + 2 S-adenosyl-L-methionine = (sulfur carrier)-H + biotin + 2 5'-deoxyadenosine + 2 L-methionine + 2 oxidized [2Fe-2S]-[ferredoxin]. The protein operates within cofactor biosynthesis; biotin biosynthesis; biotin from 7,8-diaminononanoate: step 2/2. Its function is as follows. Catalyzes the conversion of dethiobiotin (DTB) to biotin by the insertion of a sulfur atom into dethiobiotin via a radical-based mechanism. This is Biotin synthase from Neisseria gonorrhoeae (strain ATCC 700825 / FA 1090).